The primary structure comprises 194 residues: MAAADESSWPADVVEVAKVIDAWGVKGWFRVHPYAADAQAVFTSRRWYLQGPDNRPRPKDAPALPRLLHVTEVKEHGDGIVACAPEVADRSAAEALKGARIFVSRASFPTVGDGEYYWIDLIGLSVVNRDGESLGTVTDLIDTGPHSVLRLGYPSVDDKGAPVEGERLIPFVAAYIDSVQLDQKRIVADWGLDY.

In terms of domain architecture, PRC barrel spans 113-194; that stretch reads DGEYYWIDLI…RIVADWGLDY (82 aa).

Belongs to the RimM family. Binds ribosomal protein uS19.

It is found in the cytoplasm. In terms of biological role, an accessory protein needed during the final step in the assembly of 30S ribosomal subunit, possibly for assembly of the head region. Essential for efficient processing of 16S rRNA. May be needed both before and after RbfA during the maturation of 16S rRNA. It has affinity for free ribosomal 30S subunits but not for 70S ribosomes. In Leptothrix cholodnii (strain ATCC 51168 / LMG 8142 / SP-6) (Leptothrix discophora (strain SP-6)), this protein is Ribosome maturation factor RimM.